A 349-amino-acid chain; its full sequence is Isopentenyl-diphosphate delta-isomerase (349 aa).

9-10 (RK) contributes to the substrate binding site. Residues 65–67 (AMT), serine 95, and asparagine 124 each bind FMN. Residue 95-97 (STH) participates in substrate binding. Glutamine 154 is a substrate binding site. Residue glutamate 155 participates in Mg(2+) binding. FMN-binding positions include lysine 186, serine 211, threonine 216, 262–264 (GLR), and 283–284 (SR).

It belongs to the IPP isomerase type 2 family. Homooctamer. Dimer of tetramers. FMN serves as cofactor. The cofactor is NADPH. Requires Mg(2+) as cofactor.

The protein resides in the cytoplasm. The enzyme catalyses isopentenyl diphosphate = dimethylallyl diphosphate. Its function is as follows. Involved in the biosynthesis of isoprenoids. Catalyzes the 1,3-allylic rearrangement of the homoallylic substrate isopentenyl (IPP) to its allylic isomer, dimethylallyl diphosphate (DMAPP). The polypeptide is Isopentenyl-diphosphate delta-isomerase (Staphylococcus aureus (strain JH1)).